Here is a 159-residue protein sequence, read N- to C-terminus: MQVIAVYPGTFDPITNGHTDIVRRATRLFDRVVVAVAASPAKQPFFNLDERVGLARDALSGLGNVEVTGFSGLLAKFMREQQAQVILRGLRAVSDFEHEFQLAGMNRHLAPELETLFLTPAEEFAYVSSSLVREIAALGGDVSHFVSGPVVAALKARMG.

A substrate-binding site is contributed by Thr-10. ATP contacts are provided by residues 10–11 (TF) and His-18. Residues Lys-42, Leu-74, and Arg-88 each coordinate substrate. Residues 89–91 (GLR), Glu-99, and 124–130 (FAYVSSS) contribute to the ATP site.

Belongs to the bacterial CoaD family. Homohexamer. The cofactor is Mg(2+).

The protein resides in the cytoplasm. It catalyses the reaction (R)-4'-phosphopantetheine + ATP + H(+) = 3'-dephospho-CoA + diphosphate. Its pathway is cofactor biosynthesis; coenzyme A biosynthesis; CoA from (R)-pantothenate: step 4/5. Functionally, reversibly transfers an adenylyl group from ATP to 4'-phosphopantetheine, yielding dephospho-CoA (dPCoA) and pyrophosphate. In Thioalkalivibrio sulfidiphilus (strain HL-EbGR7), this protein is Phosphopantetheine adenylyltransferase.